The chain runs to 527 residues: Bifunctional purine biosynthesis protein PurH (527 aa).

Positions 1-149 (MASDFLPVHR…KNFARVAVAT (149 aa)) constitute an MGS-like domain.

It belongs to the PurH family.

It carries out the reaction (6R)-10-formyltetrahydrofolate + 5-amino-1-(5-phospho-beta-D-ribosyl)imidazole-4-carboxamide = 5-formamido-1-(5-phospho-D-ribosyl)imidazole-4-carboxamide + (6S)-5,6,7,8-tetrahydrofolate. The enzyme catalyses IMP + H2O = 5-formamido-1-(5-phospho-D-ribosyl)imidazole-4-carboxamide. Its pathway is purine metabolism; IMP biosynthesis via de novo pathway; 5-formamido-1-(5-phospho-D-ribosyl)imidazole-4-carboxamide from 5-amino-1-(5-phospho-D-ribosyl)imidazole-4-carboxamide (10-formyl THF route): step 1/1. It participates in purine metabolism; IMP biosynthesis via de novo pathway; IMP from 5-formamido-1-(5-phospho-D-ribosyl)imidazole-4-carboxamide: step 1/1. This Xylella fastidiosa (strain 9a5c) protein is Bifunctional purine biosynthesis protein PurH.